Here is a 739-residue protein sequence, read N- to C-terminus: Lysyl oxidase homolog 3A (739 aa).

The signal sequence occupies residues 1–25 (MLRSELRDMVVAMVLWGILLPFCLS). 4 SRCR domains span residues 38 to 139 (FRLA…VICK), 166 to 272 (LRPL…VSCV), 293 to 393 (MRLK…VICN), and 403 to 511 (MRLT…VICS). 12 disulfide bridges follow: Cys-64-Cys-128, Cys-77-Cys-138, Cys-108-Cys-118, Cys-196-Cys-261, Cys-209-Cys-271, Cys-238-Cys-248, Cys-318-Cys-382, Cys-331-Cys-392, Cys-362-Cys-372, Cys-433-Cys-497, Cys-446-Cys-510, and Cys-479-Cys-489. A glycan (N-linked (GlcNAc...) asparagine) is linked at Asn-256. Residue Asn-468 is glycosylated (N-linked (GlcNAc...) asparagine). An N-linked (GlcNAc...) asparagine glycan is attached at Asn-611. A cross-link (lysine tyrosylquinone (Lys-Tyr)) is located at residues 620 to 656 (KASFCLEDTECHEGVSKRYECANFGEQGITVGCWDLY). Tyr-656 carries the 2',4',5'-topaquinone modification.

This sequence belongs to the lysyl oxidase family. Requires Cu cation as cofactor. The cofactor is lysine tyrosylquinone residue. The lysine tyrosylquinone cross-link (LTQ) is generated by condensation of the epsilon-amino group of a lysine with a topaquinone produced by oxidation of tyrosine.

It localises to the secreted. The protein localises to the extracellular space. Its subcellular location is the cytoplasm. The protein resides in the nucleus. It carries out the reaction L-lysyl-[protein] + O2 + H2O = (S)-2-amino-6-oxohexanoyl-[protein] + H2O2 + NH4(+). The catalysed reaction is N(6)-acetyl-L-lysyl-[protein] + O2 + H2O = acetamide + (S)-2-amino-6-oxohexanoyl-[protein] + H2O2. In terms of biological role, protein-lysine 6-oxidase that mediates the oxidation of peptidyl lysine residues to allysine in target proteins. Catalyzes the post-translational oxidative deamination of peptidyl lysine residues in precursors of elastin and different types of collagens, a prerequisite in the formation of cross-links between collagens and elastin. Can mediate oxidation of lysine residues that are acetylated. Also able to catalyze deacetylation of lysine residues. This chain is Lysyl oxidase homolog 3A, found in Danio rerio (Zebrafish).